The following is a 303-amino-acid chain: Eukaryotic translation initiation factor 3 subunit G (303 aa).

Disordered regions lie at residues 1 to 32 (MAAV…QTIV), 81 to 100 (GLSA…VGEN), 105 to 126 (PSAN…NAMK), and 181 to 215 (GAAG…AGGK). The segment covering 109-126 (WRKDQKDESKDANANAMK) has biased composition (basic and acidic residues). The RRM domain occupies 223 to 301 (ATLRVTNVSE…LILRVEFAKK (79 aa)).

This sequence belongs to the eIF-3 subunit G family. In terms of assembly, component of the eukaryotic translation initiation factor 3 (eIF-3) complex.

The protein resides in the cytoplasm. Its function is as follows. RNA-binding component of the eukaryotic translation initiation factor 3 (eIF-3) complex, which is involved in protein synthesis of a specialized repertoire of mRNAs and, together with other initiation factors, stimulates binding of mRNA and methionyl-tRNAi to the 40S ribosome. The eIF-3 complex specifically targets and initiates translation of a subset of mRNAs involved in cell proliferation. This subunit can bind 18S rRNA. This chain is Eukaryotic translation initiation factor 3 subunit G, found in Pyricularia oryzae (strain 70-15 / ATCC MYA-4617 / FGSC 8958) (Rice blast fungus).